The chain runs to 178 residues: Large ribosomal subunit protein uL6 (178 aa).

The protein belongs to the universal ribosomal protein uL6 family. Part of the 50S ribosomal subunit.

In terms of biological role, this protein binds to the 23S rRNA, and is important in its secondary structure. It is located near the subunit interface in the base of the L7/L12 stalk, and near the tRNA binding site of the peptidyltransferase center. In Streptococcus mutans serotype c (strain ATCC 700610 / UA159), this protein is Large ribosomal subunit protein uL6.